The following is a 304-amino-acid chain: MELTFLGTSAGLPSTTRNVTAIVLNPQNNRSGLWLFDCGEGTQHQMLRATATPGKIEKIFITHLHGDHIFGLPGLLCSRSMAGCETPLEIYGPKGIAEFVETTLRLSGSWTSYPLNVHEITEGQLLDDGELTVTAYPLTHPVECYGYRIEEQDKPGALDAARLKAAGVMPGPLFQQLKRGETVTLADGRTVCGADYLSAPRPGKKIAIFGDTGPTPQAVTLARDVDVMVHETTLEAAMAEKANGRGHSTTQQAAEVARDAGAKRLLMTHFSSRYSAEECQRLLAECQAIFPASELAEDFLTITV.

Residues histidine 63, histidine 65, aspartate 67, histidine 68, histidine 140, aspartate 211, and histidine 269 each coordinate Zn(2+). Aspartate 67 acts as the Proton acceptor in catalysis.

This sequence belongs to the RNase Z family. RNase BN subfamily. As to quaternary structure, homodimer. Requires Zn(2+) as cofactor.

In terms of biological role, zinc phosphodiesterase, which has both exoribonuclease and endoribonuclease activities. The chain is Ribonuclease BN from Cronobacter sakazakii (strain ATCC BAA-894) (Enterobacter sakazakii).